We begin with the raw amino-acid sequence, 204 residues long: HTH-type transcriptional activator BcrR (204 aa).

At 1-81 the chain is on the cytoplasmic side; it reads MEFNEKLQQL…ETENRSNLKK (81 aa). The HTH cro/C1-type domain occupies 7 to 61; it reads LQQLRTGKNLTQEQLAEQLYVSRTAISKWESGKGYPNMESLKCISKFFSVTIDEL. A DNA-binding region (H-T-H motif) is located at residues 18-37; it reads QEQLAEQLYVSRTAISKWES. A helical transmembrane segment spans residues 82–102; it reads IYNYIYGILDMMAVAFIFLPL. The Extracellular portion of the chain corresponds to 103-126; the sequence is YGNSVGGYVYAVNLLSFTATTPFN. The chain crosses the membrane as a helical span at residues 127 to 147; that stretch reads LAVYWSAFAALIIIGIGKIIS. Residues 148 to 154 are Cytoplasmic-facing; the sequence is THLDKEK. A helical transmembrane segment spans residues 155-175; that stretch reads WGGIATKCSLTITALAVCFFA. Residues 176 to 181 are Extracellular-facing; it reads AAREPY. The helical transmembrane segment at 182–202 threads the bilayer; sequence ITVLVFLLLIGKIFVWIKQMG. At 203 to 204 the chain is on the cytoplasmic side; that stretch reads MK.

The protein resides in the cell membrane. With respect to regulation, constitutively bound to the bcrABD promoter. Requires bacitracin for activation, probably through a conformational change, such as the oligomerization of inactive dimers to form active tetramers. Functionally, functions both as a membrane-bound sensor and a transducer of bacitracin availability to activate transcription of the bcrABD operon in the presence of bacitracin. Binds specifically to two inverted repeat sequences on the bcrABD promoter, irrespective of bacitracin concentration. The protein is HTH-type transcriptional activator BcrR of Enterococcus faecalis (Streptococcus faecalis).